The primary structure comprises 180 residues: Nucleoside triphosphate/diphosphate phosphatase (180 aa).

Arg-26 acts as the Proton donor in catalysis. 6 residues coordinate Mg(2+): Asn-90, Asp-106, Asp-108, Asp-110, Asp-123, and Glu-126.

The protein belongs to the Ntdp family. It depends on Mg(2+) as a cofactor.

It catalyses the reaction a ribonucleoside 5'-triphosphate + H2O = a ribonucleoside 5'-diphosphate + phosphate + H(+). It carries out the reaction a ribonucleoside 5'-diphosphate + H2O = a ribonucleoside 5'-phosphate + phosphate + H(+). In terms of biological role, has nucleoside phosphatase activity towards nucleoside triphosphates and nucleoside diphosphates. In Staphylococcus aureus (strain Mu3 / ATCC 700698), this protein is Nucleoside triphosphate/diphosphate phosphatase.